Consider the following 243-residue polypeptide: Phosphoribosylaminoimidazole-succinocarboxamide synthase (243 aa).

This sequence belongs to the SAICAR synthetase family.

It catalyses the reaction 5-amino-1-(5-phospho-D-ribosyl)imidazole-4-carboxylate + L-aspartate + ATP = (2S)-2-[5-amino-1-(5-phospho-beta-D-ribosyl)imidazole-4-carboxamido]succinate + ADP + phosphate + 2 H(+). The protein operates within purine metabolism; IMP biosynthesis via de novo pathway; 5-amino-1-(5-phospho-D-ribosyl)imidazole-4-carboxamide from 5-amino-1-(5-phospho-D-ribosyl)imidazole-4-carboxylate: step 1/2. The chain is Phosphoribosylaminoimidazole-succinocarboxamide synthase from Thermosynechococcus vestitus (strain NIES-2133 / IAM M-273 / BP-1).